Reading from the N-terminus, the 349-residue chain is Succinylglutamate desuccinylase (349 aa).

Residues H70, E73, and H166 each contribute to the Zn(2+) site. Residue E229 is part of the active site.

Belongs to the AspA/AstE family. Succinylglutamate desuccinylase subfamily. It depends on Zn(2+) as a cofactor.

It catalyses the reaction N-succinyl-L-glutamate + H2O = L-glutamate + succinate. The protein operates within amino-acid degradation; L-arginine degradation via AST pathway; L-glutamate and succinate from L-arginine: step 5/5. Transforms N(2)-succinylglutamate into succinate and glutamate. The chain is Succinylglutamate desuccinylase from Burkholderia mallei (strain ATCC 23344).